Reading from the N-terminus, the 289-residue chain is CBY1-interacting BAR domain-containing protein 1 (289 aa).

Residues 1–47 (MMRRTLENRNAQTKQLQTAVSNVEKHFGELCQIFAAYVRKTARLRDK) constitute a mitochondrion transit peptide. The BAR-like stretch occupies residues 10–220 (NAQTKQLQTA…NIDEDEDLEV (211 aa)). Positions 107–178 (KMKRDDLKAT…INNFERQKMK (72 aa)) form a coiled coil. Residues 265-289 (LRKDQQAEDDEDDELDVTEEENFLK) are disordered. The segment covering 271-289 (AEDDEDDELDVTEEENFLK) has biased composition (acidic residues).

Belongs to the CIBAR family. Homodimer (via BAR-like domain). Heterodimer with FAM92B (via BAR-like domains). Interacts (via BAR-like domain) with CBY1; this interaction is required for targeting FAM92A to centriole and cilium basal body. Interacts (via BAR-like domain) with CBY3; both proteins form a ninefold symmetric structure at the flagellar base; are recruited to the annulus in a mutually dependent manner and regulate annulus positionning.

It is found in the cytoplasm. It localises to the cytoskeleton. The protein localises to the microtubule organizing center. Its subcellular location is the centrosome. The protein resides in the centriole. It is found in the cilium basal body. It localises to the cell projection. The protein localises to the cilium. Its subcellular location is the nucleus. The protein resides in the mitochondrion inner membrane. It is found in the flagellum. Functionally, plays a critical role in regulating mitochondrial ultrastructure and function by maintaining the integrity of mitochondrial morphology, particularly the organization of cristae. Preferentially binds to negatively charged phospholipids like cardiolipin and phosphatidylinositol 4,5-bisphosphate enhancing its interaction with mitochondrial membranes. Induces membrane curvature and tubulation, which are critical for maintaining mitochondrial ultrastructure and the organization of cristae. Plays a crucial role in ciliogenesis. May play a role in limb development through its role in ciliogenesis. Plays a key role in the correct positioning of the annulus, a septin-based ring structure in the sperm flagellum, serving both as a physical barrier and a membrane diffusion barrier that separates the midpiece (MP) from the principal piece (PP). This positioning is essential for proper sperm motility and function. Interacts with CBY3 to form a complex which localizes to the curved membrane region of the flagellar pocket. By doing so, may provide stability and rigidity to the periannular membrane to prevent membrane deformation. This function is crucial for halting annulus migration at the proximal end of the fibrous sheath-containing PP. The chain is CBY1-interacting BAR domain-containing protein 1 from Homo sapiens (Human).